The sequence spans 72 residues: Translational regulator CsrA (72 aa).

This sequence belongs to the CsrA/RsmA family. As to quaternary structure, homodimer; the beta-strands of each monomer intercalate to form a hydrophobic core, while the alpha-helices form wings that extend away from the core.

It is found in the cytoplasm. A translational regulator that binds mRNA to regulate translation initiation and/or mRNA stability. Usually binds in the 5'-UTR at or near the Shine-Dalgarno sequence preventing ribosome-binding, thus repressing translation. Its main target seems to be the major flagellin gene, while its function is anatagonized by FliW. The protein is Translational regulator CsrA of Ruminiclostridium cellulolyticum (strain ATCC 35319 / DSM 5812 / JCM 6584 / H10) (Clostridium cellulolyticum).